A 684-amino-acid chain; its full sequence is MGKKSVSFNRNNYKKRKNERTEPLPRRIFKNDKPSKFKSKRKEKDKNSDAYDEMLLNNNFTLLDQEEPMVEIGSKKSRNDNDSEGIRDKGGVEISNKNDPYIQFGKADPLEPLEKPDLPEEAIKRGEPTILLGIPKREGRKTNPVHDKAVENNSDFIKFDWNSDEDEDSVSNDKSKNNESLKKSSKNEIPGFMRQRGRFFHEANEKSDSNRKRKRQAYELDSQSCPWHRQYKVEREVSRIFHQDILHFIDYITPTPEEHAVRKTLVSRINQAVLQKWPDVSLYVFGSFETKLYLPTSDLDLVIISPEHHYRGTKKDMFVLAHHLKKLKLASEVQVITTANVPIIKFVDPLTKVHVDISFNQPGGLKTCLVVNGFMKKYPALRPLVIIIKHFLNMRALNEVFLGGLSSYAIVCLVVSFLQLHPRLSTGSMREEDNFGVLLLEFLELYGKQFYYDAVGIAVHNGGFYFSKKKMGWLKPNQPYLLSIQDPVDFQNDVSKSSRGLLRVKATFANGFDLLTSKLYALASRIEREGVNRVKDFPSILSTILSVDEGVRQHREHMLKCYKNNPVPLEPLVEVDALASIDVDKLPLQDVGLQYVEDESDSDETDAAKDDLFKVNESIETNGHENFQKQALTSTGEQSSSNSRANPSKLFNISSDDSEDEVPIIEDTTASDEESRAKKIRKRF.

Disordered regions lie at residues 1–52 (MGKK…DAYD), 64–127 (DQEE…KRGE), and 161–219 (WNSD…QAYE). Composition is skewed to basic and acidic residues over residues 19 to 35 (ERTEPLPRRIFKNDKPS), 73 to 91 (GSKKSRNDNDSEGIRDKGG), 108 to 127 (DPLEPLEKPDLPEEAIKRGE), 171 to 186 (SNDKSKNNESLKKSSK), and 199 to 210 (FFHEANEKSDSN). Mg(2+) is bound by residues Asp-298 and Asp-300. Gly-364, Lys-389, Ser-407, Tyr-408, Asn-492, and Lys-496 together coordinate ATP. A PAP-associated domain is found at 434–492 (NFGVLLLEFLELYGKQFYYDAVGIAVHNGGFYFSKKKMGWLKPNQPYLLSIQDPVDFQN). The tract at residues 623–684 (GHENFQKQAL…SRAKKIRKRF (62 aa)) is disordered. The segment covering 628–655 (QKQALTSTGEQSSSNSRANPSKLFNISS) has biased composition (polar residues). A compositionally biased stretch (acidic residues) spans 656-672 (DDSEDEVPIIEDTTASD).

It belongs to the DNA polymerase type-B-like family. Heterooligomer. Component of the TRAMP complex composed of at least cid14, mtr4, and air1. Mg(2+) is required as a cofactor. The cofactor is Mn(2+).

Its subcellular location is the nucleus. It localises to the nucleolus. It catalyses the reaction RNA(n) + ATP = RNA(n)-3'-adenine ribonucleotide + diphosphate. Its function is as follows. Required for 3' polyadenylation of the 5.8S and 25S rRNAs as a prelude to their degradation in the exosome. Involved in the nucleolar organization to ensure faithful chromosome segregation during mitosis. This Schizosaccharomyces pombe (strain 972 / ATCC 24843) (Fission yeast) protein is Poly(A) RNA polymerase cid14 (cid14).